Here is a 435-residue protein sequence, read N- to C-terminus: Putative F-box/FBD/LRR-repeat protein At5g56810 (435 aa).

Positions 14 to 62 (PDRISQLPNDLLFRILSLIPVSDAMSTSLLSKRWKSVWKMLPTLVYNEN) constitute an F-box domain. LRR repeat units lie at residues 64-95 (CSNIGSLGFDQFCGRSLQLHEAPLLKTLTLEL), 146-173 (LKLQGNICLDVVDSPVCFQSLKSLYLTC), 174-199 (VNFENEESFSKLLSACPVLEDLFLQR), 222-248 (KEQAYYSNDEAILEITAPSLKHLNIFD), 266-291 (SVRVKLSKNEKLPKVLTSVEHLSLDL), and 316-341 (YDNFQSNLLLSLLKDLPNLQSLKLNH). Residues 353–404 (CSVSEPSSVPECLSFHLETFQWIGYAGTFEEIAAAVYVLKNARCLKNATISL) enclose the FBD domain.

The polypeptide is Putative F-box/FBD/LRR-repeat protein At5g56810 (Arabidopsis thaliana (Mouse-ear cress)).